Here is a 197-residue protein sequence, read N- to C-terminus: Rac-like GTP-binding protein ARAC11 (197 aa).

Residue 13 to 20 (GDGAVGKT) participates in GTP binding. The Effector region motif lies at 35–43 (YVPTVFDNF). GTP is bound by residues 60–64 (DTAGQ) and 118–121 (TKLD). A Cysteine methyl ester modification is found at Cys194. A lipid anchor (S-geranylgeranyl cysteine) is attached at Cys194. Residues 195-197 (SIL) constitute a propeptide, removed in mature form.

It belongs to the small GTPase superfamily. Rho family. In terms of assembly, part of a complex containing ROPGEF1 and PRK2. Interacts with UGT1, ICR1, ICR2, ICR3, ICR4 and ICR5. Interacts with PHIP1 when activated by GTP. As to expression, exclusively expressed in mature pollen and pollen tubes.

Its subcellular location is the cytoplasm. The protein resides in the membrane. It catalyses the reaction GTP + H2O = GDP + phosphate + H(+). In terms of biological role, may be involved in cell polarity control during the actin-dependent tip growth of pollen tubes. May regulate callose synthase 1 (CALS1) activity through the interaction with UGT1. Functionally, inactive GDP-bound Rho GTPases reside in the cytosol, are found in a complex with Rho GDP-dissociation inhibitors (Rho GDIs), and are released from the GDI protein in order to translocate to membranes upon activation. This Arabidopsis thaliana (Mouse-ear cress) protein is Rac-like GTP-binding protein ARAC11.